The chain runs to 37 residues: MKVRASVRKICENCRMIRRRGKVMVVCSNPKHKQRQG.

It belongs to the bacterial ribosomal protein bL36 family.

The protein resides in the plastid. The protein localises to the chloroplast. The polypeptide is Large ribosomal subunit protein bL36c (Staurastrum punctulatum (Green alga)).